The chain runs to 840 residues: Protein argonaute-2 (840 aa).

In terms of domain architecture, PAZ spans 210–329; the sequence is PVIEFVCEVL…LPLEVCNIVA (120 aa). At Ser368 the chain carries Phosphoserine. The Piwi domain occupies 498-799; the sequence is LVVVILPGKT…VAFRARYHLV (302 aa). 2 residues coordinate a divalent metal cation: Asp578 and Asp650. Pro681 carries the post-translational modification 4-hydroxyproline. His788 provides a ligand contact to a divalent metal cation. 4 positions are modified to phosphoserine: Ser805, Ser809, Ser812, and Ser815.

The protein belongs to the argonaute family. Ago subfamily. In terms of assembly, interacts with DICER1 through its Piwi domain and with TARBP2 during assembly of the RNA-induced silencing complex (RISC). Together, DICER1, AGO2 and TARBP2 constitute the trimeric RISC loading complex (RLC), or micro-RNA (miRNA) loading complex (miRLC). Within the RLC/miRLC, DICER1 and TARBP2 are required to process precursor miRNAs (pre-miRNAs) to mature miRNAs and then load them onto AGO2. AGO2 bound to the mature miRNA constitutes the minimal RISC and may subsequently dissociate from DICER1 and TARBP2. Note however that the term RISC has also been used to describe the trimeric RLC/miRLC. The formation of RISC complexes containing siRNAs rather than miRNAs appears to occur independently of DICER1. Interacts with AGO1. Also interacts with DDB1, DDX5, DDX6, DDX20, DHX30, DHX36, DDX47, DHX9, ELAVL, FXR1, GEMIN4, HNRNPF, IGF2BP1, ILF3, IMP8, MATR3, PABPC1, PRMT5, P4HA1, P4HB, RBM4, SART3, TNRC6A, TNRC6B, UPF1 and YBX1. Interacts with the P-body components DCP1A and XRN1. Associates with polysomes and messenger ribonucleoproteins (mNRPs). Interacts with RBM4; the interaction is modulated under stress-induced conditions, occurs under both cell proliferation and differentiation conditions and in an RNA- and phosphorylation-independent manner. Interacts with LIMD1, WTIP and AJUBA. Interacts with TRIM71; the interaction increases in presence of RNA. Interacts with APOBEC3G in an RNA-dependent manner. Interacts with APOBEC3A, APOBEC3C, APOBEC3F and APOBEC3H. Interacts with DICER1, TARBP2, EIF6, MOV10 and RPL7A (60S ribosome subunit); they form a large RNA-induced silencing complex (RISC). Interacts with FMR1. Interacts with ZFP36. Interacts with RC3H1; the interaction is RNA independent. Found in a complex composed of AGO2, CHD7 and ARB2A. Interacts with SND1 and SYT11. Interacts with CLNK. Interacts with GARRE1. Hydroxylated. 4-hydroxylation appears to enhance protein stability but is not required for miRNA-binding or endonuclease activity. In terms of processing, ubiquitinated on surface-exposed lysines by a SCF-like E3 ubiquitin-protein ligase complex containing ZSWIM8 during target-directed microRNA degradation (TDMD), a process that mediates degradation of microRNAs (miRNAs). Ubiquitination by the SCF-like E3 ubiquitin-protein ligase complex containing ZSWIM8 leads to its subsequent degradation, thereby exposing miRNAs for degradation. ZSWIM8 recognizes and binds AGO2 when it is engaged with a TDMD target. Post-translationally, phosphorylation at Ser-368 by AKT3; leads to up-regulate translational repression of microRNA target and down-regulate endonucleolytic cleavage. A phosphorylation cycle of C-terminal serine cluster (Ser-805-Ser-815) regulates the release of target mRNAs. Target-binding leads to phosphorylation of these residues by CSNK1A1, which reduces the affinity of AGO2 for mRNA and enables target release. The ANKRD52-PPP6C phosphatase complex dephosphorylates the residues, which primes AGO2 for binding a new target.

It is found in the cytoplasm. Its subcellular location is the P-body. It localises to the nucleus. The enzyme catalyses Endonucleolytic cleavage to 5'-phosphomonoester.. In terms of biological role, required for RNA-mediated gene silencing (RNAi) by the RNA-induced silencing complex (RISC). The 'minimal RISC' appears to include AGO2 bound to a short guide RNA such as a microRNA (miRNA) or short interfering RNA (siRNA). These guide RNAs direct RISC to complementary mRNAs that are targets for RISC-mediated gene silencing. The precise mechanism of gene silencing depends on the degree of complementarity between the miRNA or siRNA and its target. Binding of RISC to a perfectly complementary mRNA generally results in silencing due to endonucleolytic cleavage of the mRNA specifically by AGO2. Binding of RISC to a partially complementary mRNA results in silencing through inhibition of translation, and this is independent of endonuclease activity. May inhibit translation initiation by binding to the 7-methylguanosine cap, thereby preventing the recruitment of the translation initiation factor eIF4-E. May also inhibit translation initiation via interaction with EIF6, which itself binds to the 60S ribosomal subunit and prevents its association with the 40S ribosomal subunit. The inhibition of translational initiation leads to the accumulation of the affected mRNA in cytoplasmic processing bodies (P-bodies), where mRNA degradation may subsequently occur. In some cases RISC-mediated translational repression is also observed for miRNAs that perfectly match the 3' untranslated region (3'-UTR). Can also up-regulate the translation of specific mRNAs under certain growth conditions. Binds to the AU element of the 3'-UTR of the TNF (TNF-alpha) mRNA and up-regulates translation under conditions of serum starvation. Also required for transcriptional gene silencing (TGS), in which short RNAs known as antigene RNAs or agRNAs direct the transcriptional repression of complementary promoter regions. The chain is Protein argonaute-2 (AGO2) from Oryctolagus cuniculus (Rabbit).